A 157-amino-acid polypeptide reads, in one-letter code: MLCDSIESFFGALGADRRILGLDFGEKKFGLAVSDSTGTIAMPHSVYLRRNVRQDLGELNAILKREGICAAVVGLPLQLDGMEGEMCAVVRSFVQKLIKKSGVYVYLHDERFTTAMASRTTESLGLRRKASQKVDDKISAALILQQVLDMAKGRGII.

It belongs to the YqgF nuclease family.

It is found in the cytoplasm. In terms of biological role, could be a nuclease involved in processing of the 5'-end of pre-16S rRNA. The polypeptide is Putative pre-16S rRNA nuclease (Anaplasma marginale (strain St. Maries)).